Reading from the N-terminus, the 366-residue chain is Molybdenum import ATP-binding protein ModC (366 aa).

Residues 1–231 (MSEVILQLQK…KAMRPWQSFS (231 aa)) enclose the ABC transporter domain. Position 33–40 (33–40 (GRSGAGKT)) interacts with ATP. The region spanning 292-361 (ASSIRNILPA…IKGVSVAQRD (70 aa)) is the Mop domain.

The protein belongs to the ABC transporter superfamily. Molybdate importer (TC 3.A.1.8) family. As to quaternary structure, the complex is composed of two ATP-binding proteins (ModC), two transmembrane proteins (ModB) and a solute-binding protein (ModA).

It localises to the cell inner membrane. It carries out the reaction molybdate(out) + ATP + H2O = molybdate(in) + ADP + phosphate + H(+). Its function is as follows. Part of the ABC transporter complex ModABC involved in molybdenum import. Responsible for energy coupling to the transport system. The chain is Molybdenum import ATP-binding protein ModC from Vibrio cholerae serotype O1 (strain ATCC 39315 / El Tor Inaba N16961).